Here is a 420-residue protein sequence, read N- to C-terminus: Protein disulfide isomerase Creld1 (420 aa).

A signal peptide spans 1-29 (MAPQPLRGLVPFLLWCLSLFLSLPGPVWL). Topologically, residues 30–362 (QPSPPPHSAP…GFFAEMTEDE (333 aa)) are extracellular. Positions 46 to 49 (CHTC) match the CXXC motif. Intrachain disulfides connect C46/C49, C155/C169, C163/C181, and C183/C192. One can recognise an EGF-like 1 domain in the interval 153–193 (LPCPGGTERPCGGYGQCEGEGTRGGSGHCDCQAGYGGEACG). An N-linked (GlcNAc...) asparagine glycan is attached at N205. 2 FU repeats span residues 208-255 (HLVC…EQAT) and 268-315 (SYEC…VVCP). The short motif at 278–281 (CLGC) is the CXXC element. Intrachain disulfides connect C278–C281, C309–C321, C314–C330, and C332–C343. Positions 305–342 (DVDECETVVCPGENEQCENTEGSYRCVCAEGFRQEDGI) constitute an EGF-like 2; calcium-binding domain. Residues 363–383 (MVVLQQMFFGVIICALATLAA) traverse the membrane as a helical segment. K384 is a topological domain (cytoplasmic). A helical membrane pass occupies residues 385 to 405 (GDLVFTAIFIGAVAAMTGYWL). Topologically, residues 406–420 (SERSDRVLEGFIKGR) are extracellular.

The protein belongs to the CRELD family.

The protein resides in the membrane. It carries out the reaction Catalyzes the rearrangement of -S-S- bonds in proteins.. Its function is as follows. Protein disulfide isomerase. Promotes the localization of acetylcholine receptors (AChRs) to the plasma membrane. The polypeptide is Protein disulfide isomerase Creld1 (Creld1) (Rattus norvegicus (Rat)).